Consider the following 292-residue polypeptide: NAD(P)H-hydrate epimerase (292 aa).

Residues 1 to 52 (MYGLRTLFSLGLLVGGARLGARVAQVGALGGTCPLGQGLVADGNSQCKQFRT) constitute a mitochondrion transit peptide. The YjeF N-terminal domain maps to 68–279 (AQAVDEELFN…ALEKKYSLNL (212 aa)). 122–126 (NNGGD) serves as a coordination point for (6S)-NADPHX. Asn-123 and Asp-189 together coordinate K(+). Residues 193-199 (GFSFKGA) and Asp-222 contribute to the (6S)-NADPHX site. Ser-225 contributes to the K(+) binding site.

Belongs to the NnrE/AIBP family. K(+) serves as cofactor.

Its subcellular location is the mitochondrion. It localises to the secreted. The enzyme catalyses (6R)-NADHX = (6S)-NADHX. It catalyses the reaction (6R)-NADPHX = (6S)-NADPHX. Its function is as follows. Catalyzes the epimerization of the S- and R-forms of NAD(P)HX, a damaged form of NAD(P)H that is a result of enzymatic or heat-dependent hydration. This is a prerequisite for the S-specific NAD(P)H-hydrate dehydratase to allow the repair of both epimers of NAD(P)HX. This chain is NAD(P)H-hydrate epimerase, found in Xenopus tropicalis (Western clawed frog).